Reading from the N-terminus, the 28-residue chain is Kappa-stichotoxin-Shd1a/kappa-stichotoxin-Shd1b (28 aa).

4-hydroxyproline; in form SHTX-1 (Shd1a) is present on Pro-6. 2 cysteine pairs are disulfide-bonded: Cys-7–Cys-19 and Cys-10–Cys-25.

This sequence belongs to the sea anemone BBH family. Occurs in 2 forms which differ in the post-translational modification of Pro-6. In form SHTX-1 (Shd1a) Pro-6 is a hydroxyproline while in form SHTX-2 (Shd1b) Pro-6 is unmodified.

The protein localises to the secreted. It localises to the nematocyst. Functionally, kappa-stichotoxin-Shd1a: inhibits voltage-gated potassium channels (Kv). Its function is as follows. Kappa-stichotoxin-Shd1b: inhibits voltage-gated potassium channels (Kv). This toxin inhibits the binding of 125I-alpha-dendrotoxin to synaptosomal membranes (IC(50)=270 nM). This is Kappa-stichotoxin-Shd1a/kappa-stichotoxin-Shd1b from Stichodactyla haddoni (Saddle carpet anemone).